Reading from the N-terminus, the 1328-residue chain is Myb-binding protein 1A (1328 aa).

Residues 1 to 22 are disordered; the sequence is MESRDPAQPMSPGEATQSGARP. The tract at residues 1 to 582 is interaction with MYB; sequence MESRDPAQPM…WDRMLQTLKE (582 aa). Ser11 is modified (phosphoserine). An N6-acetyllysine mark is found at Lys71 and Lys158. 2 short sequence motifs (nuclear export signal) span residues 240–258 and 263–281; these read SDENVPRLVNVLKMAASSV and KLPAIALDLLRLALKEDKF. The disordered stretch occupies residues 698 to 753; the sequence is SEDENDRVVVTDDSDERRLKGAEDKSEEGEDNRSSESEEESEGEESEEEERDGDVD. Positions 703-721 are enriched in basic and acidic residues; it reads DRVVVTDDSDERRLKGAED. The span at 734–752 shows a compositional bias: acidic residues; that stretch reads SEEESEGEESEEEERDGDV. Ser775 carries the phosphoserine modification. Residues 1146 to 1292 form a disordered region; it reads RPKLEKKDAK…KKGVLGKSPL (147 aa). The span at 1147 to 1156 shows a compositional bias: basic and acidic residues; that stretch reads PKLEKKDAKE. Lys1148 participates in a covalent cross-link: Glycyl lysine isopeptide (Lys-Gly) (interchain with G-Cter in SUMO2). Residues 1151–1328 are required for nuclear and nucleolar localization; the sequence is KKDAKEIPSA…KAQVRKAGKP (178 aa). Ser1159 and Ser1163 each carry phosphoserine. The span at 1166–1184 shows a compositional bias: basic residues; sequence SKKRKKKGFLPETKKRKKR. Ser1186 bears the Phosphoserine mark. Residues Thr1190 and Thr1196 each carry the phosphothreonine modification. The residue at position 1207 (Ser1207) is a Phosphoserine. Residues 1209–1218 show a composition bias toward basic residues; the sequence is GRKKRNRTKA. At Ser1232 the chain carries Phosphoserine. Thr1239 bears the Phosphothreonine mark. Ser1241 bears the Phosphoserine mark. Thr1244 carries the post-translational modification Phosphothreonine. Phosphoserine is present on residues Ser1248 and Ser1267. Position 1269 is a phosphothreonine (Thr1269). Ser1290 and Ser1303 each carry phosphoserine. The tract at residues 1306-1328 is disordered; that stretch reads IRSPSLLQSGAKKKAQVRKAGKP. At Arg1307 the chain carries Citrulline. A phosphoserine mark is found at Ser1308, Ser1310, and Ser1314. The segment covering 1316 to 1328 has biased composition (basic residues); the sequence is AKKKAQVRKAGKP.

It belongs to the MYBBP1A family. As to quaternary structure, binds to and represses JUN and MYB via the leucine zipper regions present in these proteins. Also binds to and represses PPARGC1A: this interaction is abrogated when PPARGC1A is phosphorylated by MAPK1/ERK. Binds to and stimulates transcription by AHR. Binds to KPNA2. Interacts with CLOCK and CRY1. Component of the B-WICH complex, at least composed of SMARCA5/SNF2H, BAZ1B/WSTF, SF3B1, DEK, MYO1C, ERCC6, MYBBP1A and DDX21. Citrullinated by PADI4.

The protein resides in the cytoplasm. The protein localises to the nucleus. Its subcellular location is the nucleolus. Its function is as follows. May activate or repress transcription via interactions with sequence specific DNA-binding proteins. Repression may be mediated at least in part by histone deacetylase activity (HDAC activity). Acts as a corepressor and in concert with CRY1, represses the transcription of the core circadian clock component PER2. Preferentially binds to dimethylated histone H3 'Lys-9' (H3K9me2) on the PER2 promoter. Has a role in rRNA biogenesis together with PWP1. This chain is Myb-binding protein 1A (MYBBP1A), found in Homo sapiens (Human).